Here is a 217-residue protein sequence, read N- to C-terminus: Small ribosomal subunit protein uS3 (217 aa).

The region spanning 38–106 (IRKYIEQRLA…RVHINIIEIK (69 aa)) is the KH type-2 domain.

It belongs to the universal ribosomal protein uS3 family. As to quaternary structure, part of the 30S ribosomal subunit. Forms a tight complex with proteins S10 and S14.

In terms of biological role, binds the lower part of the 30S subunit head. Binds mRNA in the 70S ribosome, positioning it for translation. In Lactiplantibacillus plantarum (strain ATCC BAA-793 / NCIMB 8826 / WCFS1) (Lactobacillus plantarum), this protein is Small ribosomal subunit protein uS3.